A 301-amino-acid polypeptide reads, in one-letter code: Oxaloacetate tautomerase YisK (301 aa).

Lys-99 contacts oxalate. Glu-148, Glu-150, and Asp-179 together coordinate Mn(2+). 2 residues coordinate oxalate: Lys-196 and Thr-266.

Belongs to the FAH family. As to quaternary structure, homodimer. Mg(2+) is required as a cofactor. Mn(2+) serves as cofactor.

It is found in the cytoplasm. It catalyses the reaction oxaloacetate = enol-oxaloacetate. The catalysed reaction is oxaloacetate + H(+) = pyruvate + CO2. Tautomerase that converts enol-oxaloacetate to the keto form of oxaloacetate. Also shows weak oxaloacetate decarboxylase (ODx), catalyzing the decarboxylation of oxaloacetate (OAA) to pyruvate and CO(2). The chain is Oxaloacetate tautomerase YisK from Bacillus subtilis (strain 168).